Consider the following 406-residue polypeptide: Leu/Ile/Val-binding protein homolog 5 (406 aa).

The N-terminal stretch at 1 to 29 is a signal peptide; that stretch reads MIGTRLPAWTRVLACGVAGLSLMTISAKA.

This sequence belongs to the leucine-binding protein family.

Component of an amino-acid transport system. This is Leu/Ile/Val-binding protein homolog 5 from Brucella suis biovar 1 (strain 1330).